Reading from the N-terminus, the 228-residue chain is Geranylgeranylglyceryl phosphate synthase (228 aa).

Lysine 11 serves as a coordination point for sn-glycerol 1-phosphate. Mg(2+) contacts are provided by aspartate 13 and threonine 39. Residues 159–164, glycine 189, and 209–210 each bind sn-glycerol 1-phosphate; these read YIEYSG and GN.

It belongs to the GGGP/HepGP synthase family. Group I subfamily. It depends on Mg(2+) as a cofactor.

The protein localises to the cytoplasm. The catalysed reaction is sn-glycerol 1-phosphate + (2E,6E,10E)-geranylgeranyl diphosphate = sn-3-O-(geranylgeranyl)glycerol 1-phosphate + diphosphate. It participates in membrane lipid metabolism; glycerophospholipid metabolism. In terms of biological role, prenyltransferase that catalyzes the transfer of the geranylgeranyl moiety of geranylgeranyl diphosphate (GGPP) to the C3 hydroxyl of sn-glycerol-1-phosphate (G1P). This reaction is the first ether-bond-formation step in the biosynthesis of archaeal membrane lipids. In Methanoregula boonei (strain DSM 21154 / JCM 14090 / 6A8), this protein is Geranylgeranylglyceryl phosphate synthase.